Consider the following 160-residue polypeptide: Non-secretory ribonuclease (160 aa).

The signal sequence occupies residues 1-27; the sequence is MVPKLFTSQICLLLLLGLMGVEGSLHA. Trp-34 is a glycosylation site (C-linked (Man) tryptophan). The Proton acceptor role is filled by His-42. Asn-44 carries N-linked (GlcNAc...) asparagine glycosylation. 4 disulfides stabilise this stretch: Cys-50–Cys-110, Cys-64–Cys-122, Cys-82–Cys-137, and Cys-89–Cys-98. At Tyr-60 the chain carries 3'-nitrotyrosine. 65-69 contacts substrate; it reads KNQNT. N-linked (GlcNAc...) asparagine glycans are attached at residues Asn-92, Asn-111, and Asn-138. His-155 (proton donor) is an active-site residue.

It belongs to the pancreatic ribonuclease family. In terms of assembly, interacts with and forms a tight 1:1 complex with RNH1. Dimerization of two such complexes may occur.

The protein resides in the lysosome. Its subcellular location is the cytoplasmic granule. It catalyses the reaction an [RNA] containing cytidine + H2O = an [RNA]-3'-cytidine-3'-phosphate + a 5'-hydroxy-ribonucleotide-3'-[RNA].. It carries out the reaction an [RNA] containing uridine + H2O = an [RNA]-3'-uridine-3'-phosphate + a 5'-hydroxy-ribonucleotide-3'-[RNA].. Functionally, this is a non-secretory ribonuclease. It is a pyrimidine specific nuclease with a slight preference for U. Cytotoxin and helminthotoxin. Possesses a wide variety of biological activities. This chain is Non-secretory ribonuclease (RNASE2), found in Macaca fascicularis (Crab-eating macaque).